We begin with the raw amino-acid sequence, 298 residues long: 1,2-dihydroxynaphthalene dioxygenase (298 aa).

VOC domains lie at 6-121 and 146-267; these read ELGY…IFYG and GIGH…FGWG. His-149 serves as a coordination point for Fe cation. Residues His-149, 196–197, His-212, and Tyr-253 each bind substrate; that span reads QH. His-212 lines the Fe cation pocket. Position 263 (Glu-263) interacts with Fe cation.

Belongs to the extradiol ring-cleavage dioxygenase family. Homooctamer. Fe(2+) serves as cofactor.

It catalyses the reaction naphthalene-1,2-diol + O2 = 2-hydroxychromene-2-carboxylate + H(+). It participates in aromatic compound metabolism; naphthalene degradation. Involved in the naphthalene and naphthalenesulfonate catabolic pathway. Catalyzes the meta-cleavage of 1,2-dihydroxynaphthalene (1,2-DHN) to yield 2-hydroxychromene-2-carboxylic acid. Can also cleave 1,2,5-trihydroxynaphthalene (1,2,5-THN), 1,2,6-trihydroxynaphthalene (1,2,6-THN), 1,2,7-trihydroxynaphthalene (1,2,7-THN), 2,3-dihydroxybiphenyl, 3,4-dihydroxybiphenyl, catechol, 3-methylcatechol and 4-methylcatechol. This is 1,2-dihydroxynaphthalene dioxygenase (nsaC) from Sphingobium xenophagum.